Here is a 397-residue protein sequence, read N- to C-terminus: CCA-adding enzyme (397 aa).

Positions 26 and 29 each coordinate ATP. Positions 26 and 29 each coordinate CTP. 2 residues coordinate Mg(2+): aspartate 39 and aspartate 41. ATP is bound by residues arginine 110, aspartate 153, arginine 156, arginine 159, and arginine 162. Arginine 110, aspartate 153, arginine 156, arginine 159, and arginine 162 together coordinate CTP.

This sequence belongs to the tRNA nucleotidyltransferase/poly(A) polymerase family. Bacterial CCA-adding enzyme type 3 subfamily. In terms of assembly, homodimer. It depends on Mg(2+) as a cofactor.

It catalyses the reaction a tRNA precursor + 2 CTP + ATP = a tRNA with a 3' CCA end + 3 diphosphate. It carries out the reaction a tRNA with a 3' CCA end + 2 CTP + ATP = a tRNA with a 3' CCACCA end + 3 diphosphate. Its function is as follows. Catalyzes the addition and repair of the essential 3'-terminal CCA sequence in tRNAs without using a nucleic acid template. Adds these three nucleotides in the order of C, C, and A to the tRNA nucleotide-73, using CTP and ATP as substrates and producing inorganic pyrophosphate. tRNA 3'-terminal CCA addition is required both for tRNA processing and repair. Also involved in tRNA surveillance by mediating tandem CCA addition to generate a CCACCA at the 3' terminus of unstable tRNAs. While stable tRNAs receive only 3'-terminal CCA, unstable tRNAs are marked with CCACCA and rapidly degraded. The sequence is that of CCA-adding enzyme from Bacillus cytotoxicus (strain DSM 22905 / CIP 110041 / 391-98 / NVH 391-98).